Reading from the N-terminus, the 326-residue chain is Probable cell division protein WhiA (326 aa).

Residues 275-308 constitute a DNA-binding region (H-T-H motif); the sequence is SLDELGHYADPPMTKDAVAGRIRRLLAMADKRAS.

Belongs to the WhiA family.

Its function is as follows. Involved in cell division and chromosome segregation. The polypeptide is Probable cell division protein WhiA (Leifsonia xyli subsp. xyli (strain CTCB07)).